The following is a 351-amino-acid chain: Fe-S cluster assembly protein DRE2 (351 aa).

Residues methionine 1–isoleucine 151 form an N-terminal SAM-like domain region. The interval arginine 93–aspartate 118 is disordered. Polar residues predominate over residues glycine 105–arginine 114. The linker stretch occupies residues proline 152–methionine 243. Positions 253, 264, 267, and 269 each coordinate [2Fe-2S] cluster. Positions cysteine 253–cysteine 269 are fe-S binding site A. [4Fe-4S] cluster contacts are provided by cysteine 314, cysteine 317, cysteine 325, and cysteine 328. Short sequence motifs (cx2C motif) lie at residues cysteine 314–cysteine 317 and cysteine 325–cysteine 328. The interval cysteine 314–cysteine 328 is fe-S binding site B.

The protein belongs to the anamorsin family. Monomer. Interacts with TAH18. Interacts with MIA40. The cofactor is [2Fe-2S] cluster. [4Fe-4S] cluster is required as a cofactor.

It is found in the cytoplasm. It localises to the mitochondrion intermembrane space. Component of the cytosolic iron-sulfur (Fe-S) protein assembly (CIA) machinery required for the maturation of extramitochondrial Fe-S proteins. Part of an electron transfer chain functioning in an early step of cytosolic Fe-S biogenesis, facilitating the de novo assembly of a [4Fe-4S] cluster on the scaffold complex CFD1-NBP35. Electrons are transferred to DRE2 from NADPH via the FAD- and FMN-containing protein TAH18. TAH18-DRE2 are also required for the assembly of the diferric tyrosyl radical cofactor of ribonucleotide reductase (RNR), probably by providing electrons for reduction during radical cofactor maturation in the catalytic small subunit RNR2. This chain is Fe-S cluster assembly protein DRE2, found in Ajellomyces capsulatus (strain H143) (Darling's disease fungus).